The sequence spans 315 residues: tRNA dimethylallyltransferase (315 aa).

10–17 (GPTGVGKT) provides a ligand contact to ATP. 12-17 (TGVGKT) provides a ligand contact to substrate. The interaction with substrate tRNA stretch occupies residues 35–38 (DSMQ).

Belongs to the IPP transferase family. Monomer. The cofactor is Mg(2+).

The catalysed reaction is adenosine(37) in tRNA + dimethylallyl diphosphate = N(6)-dimethylallyladenosine(37) in tRNA + diphosphate. Functionally, catalyzes the transfer of a dimethylallyl group onto the adenine at position 37 in tRNAs that read codons beginning with uridine, leading to the formation of N6-(dimethylallyl)adenosine (i(6)A). This Thermodesulfovibrio yellowstonii (strain ATCC 51303 / DSM 11347 / YP87) protein is tRNA dimethylallyltransferase.